A 334-amino-acid chain; its full sequence is MIRIALDLMGGDRAPEEIKAGALMYLQNVKKTGRKVQLVLVGLADTLKEFEHFKSEGLVELVEAQEALPMDVKPTDALRRKNSSMYIASQLVKEKKAEAIVSAGNTGALLSCATLVVGRLPGVDRPALAVPVPSLNDFTILIDAGANAEVKHEWLIQFAAMGIEYAKILGKRNPKVGLLNVGTEENKGTELEKQAYQLLKQAFNESFYGNVEGNDINIGTVDVVVTNGFSGNIAMKTMEGVAKLISHTIKQEAKKSLDGILGALLFSRTLKKLKKKLDPRTYGGSFFLGVDGIVVKAHGNSDRIAIYNAIDVAVRGVEGKLVEQLNERLKVYNK.

The protein belongs to the PlsX family. As to quaternary structure, homodimer. Probably interacts with PlsY.

It is found in the cytoplasm. It carries out the reaction a fatty acyl-[ACP] + phosphate = an acyl phosphate + holo-[ACP]. Its pathway is lipid metabolism; phospholipid metabolism. Catalyzes the reversible formation of acyl-phosphate (acyl-PO(4)) from acyl-[acyl-carrier-protein] (acyl-ACP). This enzyme utilizes acyl-ACP as fatty acyl donor, but not acyl-CoA. The sequence is that of Phosphate acyltransferase from Fervidobacterium nodosum (strain ATCC 35602 / DSM 5306 / Rt17-B1).